The sequence spans 454 residues: Tubulin beta-3 chain (454 aa).

Q11, E75, S144, G148, T149, G150, N210, and N232 together coordinate GTP. Residue E75 participates in Mg(2+) binding. The interval 435-454 (TADDEFDPEVNQEEVEGDCI) is disordered.

This sequence belongs to the tubulin family. As to quaternary structure, dimer of alpha and beta chains. A typical microtubule is a hollow water-filled tube with an outer diameter of 25 nm and an inner diameter of 15 nM. Alpha-beta heterodimers associate head-to-tail to form protofilaments running lengthwise along the microtubule wall with the beta-tubulin subunit facing the microtubule plus end conferring a structural polarity. Microtubules usually have 13 protofilaments but different protofilament numbers can be found in some organisms and specialized cells. It depends on Mg(2+) as a cofactor.

The protein localises to the cytoplasm. The protein resides in the cytoskeleton. In terms of biological role, tubulin is the major constituent of microtubules, a cylinder consisting of laterally associated linear protofilaments composed of alpha- and beta-tubulin heterodimers. Microtubules grow by the addition of GTP-tubulin dimers to the microtubule end, where a stabilizing cap forms. Below the cap, tubulin dimers are in GDP-bound state, owing to GTPase activity of alpha-tubulin. The protein is Tubulin beta-3 chain (betaTub60D) of Drosophila melanogaster (Fruit fly).